A 428-amino-acid chain; its full sequence is Elongation factor 1-alpha (428 aa).

The 221-residue stretch at 5–225 (KPILNVAFIG…DAFQPPEKPT (221 aa)) folds into the tr-type G domain. Residues 14–21 (GHVDAGKS) are G1. 14 to 21 (GHVDAGKS) is a binding site for GTP. S21 is a Mg(2+) binding site. Residues 70 to 74 (GVTID) are G2. The tract at residues 91–94 (DCPG) is G3. Residues 91 to 95 (DCPGH) and 149 to 152 (NKMD) each bind GTP. Residues 149 to 152 (NKMD) are G4. Positions 189 to 191 (ASL) are G5.

This sequence belongs to the TRAFAC class translation factor GTPase superfamily. Classic translation factor GTPase family. EF-Tu/EF-1A subfamily.

Its subcellular location is the cytoplasm. It carries out the reaction GTP + H2O = GDP + phosphate + H(+). GTP hydrolase that promotes the GTP-dependent binding of aminoacyl-tRNA to the A-site of ribosomes during protein biosynthesis. This chain is Elongation factor 1-alpha, found in Methanococcus maripaludis (strain C7 / ATCC BAA-1331).